The chain runs to 238 residues: Ribonuclease PH (238 aa).

Phosphate contacts are provided by residues Arg86 and 124–126 (GTR).

Belongs to the RNase PH family. As to quaternary structure, homohexameric ring arranged as a trimer of dimers.

It catalyses the reaction tRNA(n+1) + phosphate = tRNA(n) + a ribonucleoside 5'-diphosphate. Functionally, phosphorolytic 3'-5' exoribonuclease that plays an important role in tRNA 3'-end maturation. Removes nucleotide residues following the 3'-CCA terminus of tRNAs; can also add nucleotides to the ends of RNA molecules by using nucleoside diphosphates as substrates, but this may not be physiologically important. Probably plays a role in initiation of 16S rRNA degradation (leading to ribosome degradation) during starvation. This chain is Ribonuclease PH, found in Shigella dysenteriae serotype 1 (strain Sd197).